The following is an 86-amino-acid chain: Large ribosomal subunit protein bL35m (86 aa).

A mitochondrion-targeting transit peptide spans 1–18 (MLVVFQRVVRATVLVGRK). Positions 45-69 (RKHAGAQHLNRDTSSSTRARQRQWE) are disordered.

Belongs to the bacterial ribosomal protein bL35 family. As to quaternary structure, component of the mitochondrial large ribosomal subunit (mt-LSU). Mature yeast 74S mitochondrial ribosomes consist of a small (37S) and a large (54S) subunit. The 37S small subunit contains a 15S ribosomal RNA (15S mt-rRNA) and at least 32 different proteins. The 54S large subunit contains a 21S rRNA (21S mt-rRNA) and at least 45 different proteins.

The protein localises to the mitochondrion. Functionally, component of the mitochondrial ribosome (mitoribosome), a dedicated translation machinery responsible for the synthesis of mitochondrial genome-encoded proteins, including at least some of the essential transmembrane subunits of the mitochondrial respiratory chain. The mitoribosomes are attached to the mitochondrial inner membrane and translation products are cotranslationally integrated into the membrane. This Schizosaccharomyces pombe (strain 972 / ATCC 24843) (Fission yeast) protein is Large ribosomal subunit protein bL35m (new15).